Reading from the N-terminus, the 367-residue chain is Aminomethyltransferase (367 aa).

It belongs to the GcvT family. The glycine cleavage system is composed of four proteins: P, T, L and H.

It carries out the reaction N(6)-[(R)-S(8)-aminomethyldihydrolipoyl]-L-lysyl-[protein] + (6S)-5,6,7,8-tetrahydrofolate = N(6)-[(R)-dihydrolipoyl]-L-lysyl-[protein] + (6R)-5,10-methylene-5,6,7,8-tetrahydrofolate + NH4(+). In terms of biological role, the glycine cleavage system catalyzes the degradation of glycine. This chain is Aminomethyltransferase, found in Parasynechococcus marenigrum (strain WH8102).